A 792-amino-acid polypeptide reads, in one-letter code: Cis-abienol synthase, chloroplastic (792 aa).

A chloroplast-targeting transit peptide spans 1-37 (MVLGLRSKIIPLPDHKLGNIKLGSVTNAICHRPCRVR). Mg(2+) is bound by residues Asp539, Asp543, Asn684, and Glu692. The DDXXD motif motif lies at 539-543 (DDFFD).

It belongs to the terpene synthase family. The cofactor is Mg(2+). As to expression, expressed specifically in trichomes.

It localises to the plastid. Its subcellular location is the chloroplast. It carries out the reaction 8-hydroxycopalyl diphosphate = cis-abienol + diphosphate. It participates in secondary metabolite biosynthesis; terpenoid biosynthesis. Functionally, involved in the biosynthesis of cis-abienol, a labdane diterpene that can be used as synthesis precursor of ambergris substitution fragance products. The sequence is that of Cis-abienol synthase, chloroplastic from Nicotiana tabacum (Common tobacco).